A 383-amino-acid polypeptide reads, in one-letter code: Acetylornithine deacetylase (383 aa).

His-80 is a binding site for Zn(2+). Asp-82 is an active-site residue. Residue Asp-112 coordinates Zn(2+). The active site involves Glu-144. 3 residues coordinate Zn(2+): Glu-145, Glu-169, and His-355.

This sequence belongs to the peptidase M20A family. ArgE subfamily. Homodimer. Zn(2+) serves as cofactor. Requires Co(2+) as cofactor. Glutathione is required as a cofactor.

The protein resides in the cytoplasm. It catalyses the reaction N(2)-acetyl-L-ornithine + H2O = L-ornithine + acetate. Its pathway is amino-acid biosynthesis; L-arginine biosynthesis; L-ornithine from N(2)-acetyl-L-ornithine (linear): step 1/1. Functionally, catalyzes the hydrolysis of the amide bond of N(2)-acetylated L-amino acids. Cleaves the acetyl group from N-acetyl-L-ornithine to form L-ornithine, an intermediate in L-arginine biosynthesis pathway, and a branchpoint in the synthesis of polyamines. In Erwinia tasmaniensis (strain DSM 17950 / CFBP 7177 / CIP 109463 / NCPPB 4357 / Et1/99), this protein is Acetylornithine deacetylase.